Consider the following 568-residue polypeptide: MRQTMTFIPTLKEVPADAEVKSHQLLLRAGFIRQTASGIYSYLPLATLMLRKIETIIREELEAIGAAELLMPALQPAELWQESGRWNDYGPELMRLKDRASRDFALGPTHEEVITALLRDEVKSYKRLPLTLYQIQTKFRDEKRPRFGLLRGREFIMKDAYSFHATSESLDEVYNLMHQAYSNIFTRCGLEFRSVIADSGSIGGNESKEFMALSDIGEDTIAYSDASDYAANTEMAPVLYMEKKSHELEKDMEKVATPDQKSIADIVEFLEVPIEKTMKSMLYQVDDEVIMVLVRGDHEVNDIKIKNALDATNVELVDPAVAVELLGANFGSLGPINVPENTRVFADNAVKDIVNAVVGANEDGFHYINVNPDRDFSVTSYFDLRMIQVGDLSPDGQGVIKFAEGIEVGHIFKLGTKYSEAMNATILDENGRAQPIIMGCYGIGVSRILSAIAEQSNDENGFVWDKQISPFDLHLIPVNMKSEEQVAFAETLYSSLQDAGFSVLIDDRAERAGVKFADADLIGLPIRITVGKKAAEGVVEVKIRKTGEMIEVRQDELLNTLPILFGDK.

Belongs to the class-II aminoacyl-tRNA synthetase family. ProS type 1 subfamily. Homodimer.

The protein resides in the cytoplasm. It carries out the reaction tRNA(Pro) + L-proline + ATP = L-prolyl-tRNA(Pro) + AMP + diphosphate. Catalyzes the attachment of proline to tRNA(Pro) in a two-step reaction: proline is first activated by ATP to form Pro-AMP and then transferred to the acceptor end of tRNA(Pro). As ProRS can inadvertently accommodate and process non-cognate amino acids such as alanine and cysteine, to avoid such errors it has two additional distinct editing activities against alanine. One activity is designated as 'pretransfer' editing and involves the tRNA(Pro)-independent hydrolysis of activated Ala-AMP. The other activity is designated 'posttransfer' editing and involves deacylation of mischarged Ala-tRNA(Pro). The misacylated Cys-tRNA(Pro) is not edited by ProRS. The sequence is that of Proline--tRNA ligase from Listeria monocytogenes serotype 4b (strain F2365).